Here is a 468-residue protein sequence, read N- to C-terminus: SVGFKAGVKEYKLTYYTPEYETKDTDILAAFRVTPQPGVPPEEAGAAVAAESSTGTWTTVWTDGLTSLDRYKGRCYHIEPVPGEADQYICYVAYPLDLFEEGSVTNMFTSIVGNVFGFKALRALRLEDLRIPPAYIKTFQGPPHGIQVERDKLNKYGRPLLGCTIKPKLGLSAKNYGRAVYECLRGGLDFTKDDENVNSQPFMRWRDRFLFCAEALYKAQAETGEIKGHYLNATAGTCEEMIKRAVFARELGVPIVMHDYLTGGFTANTSLAHYCRDNGLLLHIHRAMHAVIDRQKNHGIHFRVLAKALRMSGGDHIHSGTVVGKLEGERDITLGFVDLLRDDFIEKDRSRGIYFTQDWVSLPGVIPVASGGIHVWHMPALTEIFGDDSVLQFGGGTLGHPWGNAPGAVANRVALEACVKARNEGRDLAAEGNTIIREASKWSLELAAACEVWKEIKFEFAAVDTLDR.

Position 5 is an N6,N6,N6-trimethyllysine (K5). Residues N114 and T164 each coordinate substrate. Catalysis depends on K166, which acts as the Proton acceptor. Substrate is bound at residue K168. K192, D194, and E195 together coordinate Mg(2+). N6-carboxylysine is present on K192. The active-site Proton acceptor is the H285. Substrate-binding residues include R286, H318, and S370.

This sequence belongs to the RuBisCO large chain family. Type I subfamily. Heterohexadecamer of 8 large chains and 8 small chains; disulfide-linked. The disulfide link is formed within the large subunit homodimers. It depends on Mg(2+) as a cofactor. In terms of processing, the disulfide bond which can form in the large chain dimeric partners within the hexadecamer appears to be associated with oxidative stress and protein turnover.

It localises to the plastid. Its subcellular location is the chloroplast. It carries out the reaction 2 (2R)-3-phosphoglycerate + 2 H(+) = D-ribulose 1,5-bisphosphate + CO2 + H2O. It catalyses the reaction D-ribulose 1,5-bisphosphate + O2 = 2-phosphoglycolate + (2R)-3-phosphoglycerate + 2 H(+). In terms of biological role, ruBisCO catalyzes two reactions: the carboxylation of D-ribulose 1,5-bisphosphate, the primary event in carbon dioxide fixation, as well as the oxidative fragmentation of the pentose substrate in the photorespiration process. Both reactions occur simultaneously and in competition at the same active site. In Tecoma stans (Yellow bells), this protein is Ribulose bisphosphate carboxylase large chain.